Consider the following 1399-residue polypeptide: DNA-directed RNA polymerase subunit beta' (1399 aa).

The Zn(2+) site is built by cysteine 70, cysteine 72, cysteine 85, and cysteine 88. Mg(2+)-binding residues include aspartate 460, aspartate 462, and aspartate 464. The Zn(2+) site is built by cysteine 814, cysteine 888, cysteine 895, and cysteine 898.

The protein belongs to the RNA polymerase beta' chain family. The RNAP catalytic core consists of 2 alpha, 1 beta, 1 beta' and 1 omega subunit. When a sigma factor is associated with the core the holoenzyme is formed, which can initiate transcription. It depends on Mg(2+) as a cofactor. Requires Zn(2+) as cofactor.

The catalysed reaction is RNA(n) + a ribonucleoside 5'-triphosphate = RNA(n+1) + diphosphate. DNA-dependent RNA polymerase catalyzes the transcription of DNA into RNA using the four ribonucleoside triphosphates as substrates. This is DNA-directed RNA polymerase subunit beta' from Pseudomonas fluorescens (strain SBW25).